Reading from the N-terminus, the 124-residue chain is Autophagy-related protein 8 (124 aa).

Glycine 116 is lipidated: Phosphatidylethanolamine amidated glycine. A propeptide spans 117 to 124 (GAGPLLEK) (removed in mature form).

The protein belongs to the ATG8 family. As to quaternary structure, conjugation to phosphatidylethanolamine (PE) leads to homodimerization. Interacts with ATG1, ATG3, ATG4, ATG7 and ATG12. The C-terminal 8 residues of ATG8 are removed by ATG4 to expose Gly-116 at the C-terminus. This Gly-116 forms then a thioester bond with the 'Cys-550' of ATG7 (E1-like activating enzyme) before being transferred to the 'Cys-244' of ATG3 (the specific E2 conjugating enzyme), in order to be finally amidated with phosphatidylethanolamine. This lipid modification anchors ATG8 to membranes and can be reversed by ATG4, releasing soluble ATG8.

The protein localises to the cytoplasmic vesicle. It is found in the cvt vesicle membrane. It localises to the autophagosome membrane. Its subcellular location is the vacuole membrane. In terms of biological role, ubiquitin-like modifier involved in cytoplasm to vacuole transport (Cvt) vesicles and autophagosome formation. With ATG4, mediates the delivery of the vesicles and autophagosomes to the vacuole via the microtubule cytoskeleton. Required for selective autophagic degradation of the nucleus (nucleophagy) as well as for mitophagy which contributes to regulate mitochondrial quantity and quality by eliminating the mitochondria to a basal level to fulfill cellular energy requirements and preventing excess ROS production. Also participates in membrane fusion events that take place in the early secretory pathway. Also involved in endoplasmic reticulum-specific autophagic process and is essential for the survival of cells subjected to severe ER stress. The ATG8-PE conjugate mediates tethering between adjacent membranes and stimulates membrane hemifusion, leading to expansion of the autophagosomal membrane during autophagy. Moreover not only conjugation, but also subsequent ATG8-PE deconjugation is an important step required to facilitate multiple events during macroautophagy, and especially for efficient autophagosome biogenesis, the assembly of ATG9-containing tubulovesicular clusters into phagophores/autophagosomes, and for the disassembly of PAS-associated ATG components. This is Autophagy-related protein 8 from Kluyveromyces marxianus (strain DMKU3-1042 / BCC 29191 / NBRC 104275) (Yeast).